We begin with the raw amino-acid sequence, 810 residues long: Chloride channel protein (810 aa).

Residues 2–48 are Cytoplasmic-facing; that stretch reads SHEKNEASGNPEAQSWKAQEAMLGVKTEVSRWRAVKNCLYRHLVKVL. 2 helical membrane-spanning segments follow: residues 49–86 and 93–116; these read GEDW…LFAM and LQYL…CQIV. Residues 122-126 carry the Selectivity filter part_1 motif; that stretch reads GSGIP. Position 123 (Ser123) interacts with chloride. The segment at residues 125 to 132 is an intramembrane region (helical); the sequence is IPELKTII. Helical transmembrane passes span 141-160 and 166-184; these read LTLR…LSAG and EGPF…NQLL. Residues 164–168 carry the Selectivity filter part_2 motif; that stretch reads GKEGP. 2 intramembrane regions (helical) span residues 201–213 and 217–225; these read ILTV…ISCC and PLAGVLFSI. The next 3 membrane-spanning stretches (helical) occupy residues 237-254, 283-311, and 320-339; these read YWRG…FRVL, LPAF…IVFM, and ILKK…LATL. Asn365 carries an N-linked (GlcNAc...) asparagine glycan. Transmembrane regions (helical) follow at residues 389–408 and 416–439; these read NIFI…AALA and GAFV…MALL. The Selectivity filter part_3 signature appears at 416-420; that stretch reads GAFVP. Chloride is bound at residue Phe418. An intramembrane region (helical) is located at residues 456–470; sequence GEYAVIGAAAMTGAV. Residues 471-472 constitute an intramembrane region (note=Loop between two helices); it reads TH. An intramembrane region (helical) is located at residues 473–484; that stretch reads AVSTAVICFELT. An intramembrane region (note=Loop between two helices) is located at residues 485–489; the sequence is GQISH. Residues 490–506 traverse the membrane as a helical segment; the sequence is VLPMMVAVILANMVAQG. The Cytoplasmic portion of the chain corresponds to 507-810; it reads LQPSLYDSII…RTATSNSSGK (304 aa). Tyr512 lines the chloride pocket. Residues 543–601 enclose the CBS 1 domain; sequence MVRDVTSIASTSTYGDLLHVLRQTKLKFFPFVDTPETNTLLGSIERTEVEGLLQRRISA. Disordered stretches follow at residues 604–631 and 658–688; these read RQPA…DVPG and KVQT…KHKG. A CBS 2 domain is found at 724–781; that stretch reads IDQSPFQLVEGTSLQKTHTLFSLLGLDRAYVTSMGKLVGVVALAEIQAAIEGSYQKGF.

The protein belongs to the chloride channel (TC 2.A.49) family. ClC-0 subfamily. Homodimer. Each subunit has channel activity ('Double barreled channel').

It localises to the membrane. In terms of biological role, voltage-gated chloride channel. This channel is thought to ensure the high conductance of the non-innervated membrane of the electrocyte necessary for efficient current generation caused by sodium influx through the acetylcholine receptor at the innervated membrane. The protein is Chloride channel protein of Tetronarce californica (Pacific electric ray).